The following is a 1444-amino-acid chain: DNA polymerase III PolC-type (1444 aa).

Residues Tyr428–Ala584 form the Exonuclease domain.

This sequence belongs to the DNA polymerase type-C family. PolC subfamily.

It localises to the cytoplasm. The enzyme catalyses DNA(n) + a 2'-deoxyribonucleoside 5'-triphosphate = DNA(n+1) + diphosphate. Required for replicative DNA synthesis. This DNA polymerase also exhibits 3' to 5' exonuclease activity. The protein is DNA polymerase III PolC-type of Listeria monocytogenes serovar 1/2a (strain ATCC BAA-679 / EGD-e).